The sequence spans 423 residues: MDVDIGCYFEEKRYDDKLLDFIRYDVKTPKKTKYILQRPTATDEESVRLQRFYQLGVDLKLKYSKRRSLKKQGRIKNATEELLRLANEQLKLFNRIVERETNWIIYPLWVMAKQLIRLANESSELNKDSIEECGRTIHRSFTICLNDRNPRLNENKKIGCYMFANLEFSIYHRLSNKDMIKNLVKVLESRVNARDIPPLNKSLAMEHKSQVVLYNYYLGQYYGCLENDHERGFFHLNEALLQCPMLYVESTGKFVLQGQMEKIMILLVPLALLTKRLYPHWDHPVIAGVITRSKRLSQVYPTLVRSVISGNLSLYEATAASHERFFLSQGLHVVITLLREVVFTRLVQRCWQWGNDRKSIMPLKILLATKQHDSSANEDEEEQLDALECRLASAIASGLLRAYLSHSNRCIVFSKKEPFPHSK.

One can recognise a PCI domain in the interval 232–418 (GFFHLNEALL…RCIVFSKKEP (187 aa)).

This sequence belongs to the CSN12 family. In terms of assembly, component of a COP9 signalosome-like (CSN) complex, composed of RRI1/CSN5, CSN9, RRI2/CSN10, PCI8/CSN11, CSN12 and CSI1. In the complex, it probably interacts directly with RRI1/CSN5, CSN9, RRI2/CSN10 and CSI1. Interacts with SEM1 and THP3.

It is found in the cytoplasm. The protein resides in the nucleus. In terms of biological role, component of the COP9 signalosome (CSN) complex that acts as an regulator of the ubiquitin (Ubl) conjugation pathway by mediating the deneddylation of the cullin subunit of SCF-type E3 ubiquitin-protein ligase complexes. The CSN complex is involved in the regulation of the mating pheromone response. CSN12 forms a complex with THP3 that is recruited to transcribed genes and required for transcription elongation. The sequence is that of Cop9 signalosome complex subunit 12 (CSN12) from Saccharomyces cerevisiae (strain ATCC 204508 / S288c) (Baker's yeast).